The primary structure comprises 469 residues: Adenosylhomocysteinase (469 aa).

Positions 63, 139, and 164 each coordinate substrate. NAD(+) is bound at residue 165–167; it reads TTT. Substrate is bound by residues lysine 194 and aspartate 198. NAD(+)-binding positions include asparagine 199, 228 to 233, glutamate 251, asparagine 300, 321 to 323, and asparagine 375; these read GYGDVG and IGH.

The protein belongs to the adenosylhomocysteinase family. It depends on NAD(+) as a cofactor.

The protein resides in the cytoplasm. It carries out the reaction S-adenosyl-L-homocysteine + H2O = L-homocysteine + adenosine. It functions in the pathway amino-acid biosynthesis; L-homocysteine biosynthesis; L-homocysteine from S-adenosyl-L-homocysteine: step 1/1. Its function is as follows. May play a key role in the regulation of the intracellular concentration of adenosylhomocysteine. The sequence is that of Adenosylhomocysteinase from Pseudomonas syringae pv. syringae (strain B728a).